A 73-amino-acid chain; its full sequence is Maltose-binding periplasmic protein (73 aa).

The signal sequence occupies residues 1–30 (MMTKTNLKMGARTLALSVLATLVLSASALA).

It belongs to the bacterial solute-binding protein 1 family.

It is found in the periplasm. Involved in the high-affinity maltose membrane transport system. Initial receptor for the active transport of and chemotaxis toward maltooligosaccharides. This chain is Maltose-binding periplasmic protein (malE), found in Photorhabdus luminescens (Xenorhabdus luminescens).